The sequence spans 332 residues: Melanocortin receptor 4 (332 aa).

Residues 1-43 (MNSTQPLGMHTSLHSWNRSAHGMPTNVSESLAKGYSDGGCYEQ) lie on the Extracellular side of the membrane. N-linked (GlcNAc...) asparagine glycosylation is found at asparagine 2, asparagine 17, and asparagine 26. Cystine bridges form between cysteine 40–cysteine 279 and cysteine 271–cysteine 277. Residues 44-69 (LFVSPEVFVTLGVISLLENILVIVAI) form a helical membrane-spanning segment. Topologically, residues 70–81 (AKNKNLHSPMYF) are cytoplasmic. A helical transmembrane segment spans residues 82 to 106 (FICSLAVADMLVSVSNGSETIVITL). Ca(2+) is bound by residues glutamate 100, aspartate 122, and aspartate 126. Residues 107–123 (LNSTDTDAQSFTVDIDN) lie on the Extracellular side of the membrane. A helical membrane pass occupies residues 124-145 (VIDSVICSSLLASICSLLSIAV). Residues 146–165 (DRYFTIFYALQYHNIMTVKR) lie on the Cytoplasmic side of the membrane. A helical membrane pass occupies residues 166-186 (VAITISAIWAACTVSGVLFII). At 187-191 (YSDSS) the chain is on the extracellular side. The chain crosses the membrane as a helical span at residues 192–215 (AVIICLITVFFTMLALMASLYVHM). The Cytoplasmic portion of the chain corresponds to 216 to 248 (FLMARLHIKRIAVLPGSGTIRQGANMKGAITLT). A helical membrane pass occupies residues 249 to 271 (ILIGVFVVCWAPFFLHLIFYISC). The Extracellular segment spans residues 272–280 (PQNPYCVCF). Residues 281 to 304 (MSHFNLYLILIMCNSIIDPLIYAL) form a helical membrane-spanning segment. Residues 305–332 (RSQELRKTFKEIICCSPLGGLCDLSSRY) lie on the Cytoplasmic side of the membrane. Cysteine 318 carries the S-palmitoyl cysteine lipid modification.

It belongs to the G-protein coupled receptor 1 family. In terms of assembly, homodimer; disulfide-linked, also forms higher order oligomers. Interacts with GNAS. Interacts with ATRNL1. Interacts with MGRN1; this interaction competes with GNAS-binding and thus inhibits agonist-induced cAMP production. Interacts with MRAP and MRAP2; these associated factors increase ligand-sensitivity and generation of cAMP.

Its subcellular location is the cell membrane. In terms of biological role, hormone receptor that acts as a key component of the leptin-melanocortin pathway at the intersection of homeostatic maintenance of energetic state. Plays a role in regulating food intake: activation by a stimulating hormone such as anorexigenic alpha-melanocyte stimulating hormone (alpha-MSH) inhibits appetite, whereas binding to a natural antagonist like Agouti-related protein/AGRP promotes appetite. G-protein-coupled receptor that activates conventional Galphas signaling leading to induction of anorexogenic signaling in the hypothalamus to result in negative energy balance. Regulates the firing activity of neurons from the hypothalamus by alpha-MSH and AGRP independently of Galphas signaling by ligand-induced coupling of closure of inwardly rectifying potassium channel KCNJ13. In intestinal epithelial cells, plays a role in the inhibition of hepatic glucose production via nesfatin-1/NUCB2 leading to increased cyclic adenosine monophosphate (cAMP) levels and glucagon-like peptide 1 (GLP-1) secretion in the intestinal epithelium. The chain is Melanocortin receptor 4 (MC4R) from Bos taurus (Bovine).